The primary structure comprises 90 residues: Molybdopterin synthase sulfur carrier subunit (90 aa).

Glycine 90 is subject to 1-thioglycine; alternate. Glycine 90 bears the Glycyl adenylate; alternate mark.

The protein belongs to the MoaD family. MOCS2A subfamily. Heterotetramer; composed of 2 small (Mocs2A) and 2 large (Mocs2B) subunits. In terms of processing, C-terminal thiocarboxylation occurs in 2 steps, it is first acyl-adenylated (-COAMP) via the hesA/moeB/thiF part of MOCS3, then thiocarboxylated (-COSH) via the rhodanese domain of MOCS3.

It is found in the cytoplasm. It participates in cofactor biosynthesis; molybdopterin biosynthesis. Functionally, acts as a sulfur carrier required for molybdopterin biosynthesis. Component of the molybdopterin synthase complex that catalyzes the conversion of precursor Z into molybdopterin by mediating the incorporation of 2 sulfur atoms into precursor Z to generate a dithiolene group. In the complex, serves as sulfur donor by being thiocarboxylated (-COSH) at its C-terminus by MOCS3. After interaction with Mocs2B, the sulfur is then transferred to precursor Z to form molybdopterin. The sequence is that of Molybdopterin synthase sulfur carrier subunit from Drosophila erecta (Fruit fly).